The primary structure comprises 183 residues: MPFRDTYIMSPINRRRCSRVSLVECLQLTWSTXELLVFEFKPRMSFSHTQSVLYPKNTYCHSFKHFLSNQTLSSLKSVESCIRMGNLTCMPSFNSRVKSRLRTIVSSIVYTQAVAPVSTPTFKVPNQARMSSPIWIRTATPSNGDNFKSMDDLLEAVNNQRMMLTPKRLTAAVSQKLLMSLGN.

It belongs to the geminiviridae protein AC4/C4 family.

Functionally, pathogenicity determinant. May act as a suppressor of RNA-mediated gene silencing, also known as post-transcriptional gene silencing (PTGS), a mechanism of plant viral defense that limits the accumulation of viral RNAs. This chain is Protein AC4, found in African cassava mosaic virus (isolate West Kenyan 844) (ACMV).